Reading from the N-terminus, the 297-residue chain is Protein PecM (297 aa).

Transmembrane regions (helical) follow at residues 6 to 26 (FAFY…QFLP), 38 to 58 (ALPA…GWLW), 60 to 80 (LFVL…FAAY), 86 to 106 (VVAL…FLLL), 116 to 136 (VAAV…KAPL), 138 to 158 (PAGL…LVLT), 167 to 187 (MTML…ILPV), 203 to 223 (LAGY…MWFS), 231 to 251 (VIMS…GFLF), and 261 to 281 (LVGV…SLFS). 2 EamA domains span residues 12–130 (CVWG…LLIS) and 149–276 (MSMA…IVQD).

Belongs to the EamA transporter family.

It is found in the cell membrane. Functionally, involved in pectinase, cellulase, and blue pigment regulation. The polypeptide is Protein PecM (pecM) (Dickeya dadantii (strain 3937) (Erwinia chrysanthemi (strain 3937))).